The primary structure comprises 1034 residues: Isoleucine--tRNA ligase (1034 aa).

A 'HIGH' region motif is present at residues 48-58 (PTANGKPHIGH). The 'KMSKS' region signature appears at 588–592 (KMSKH). ATP is bound at residue lysine 591.

Belongs to the class-I aminoacyl-tRNA synthetase family. IleS type 2 subfamily. In terms of assembly, monomer. The cofactor is Zn(2+).

Its subcellular location is the cytoplasm. It catalyses the reaction tRNA(Ile) + L-isoleucine + ATP = L-isoleucyl-tRNA(Ile) + AMP + diphosphate. In terms of biological role, catalyzes the attachment of isoleucine to tRNA(Ile). As IleRS can inadvertently accommodate and process structurally similar amino acids such as valine, to avoid such errors it has two additional distinct tRNA(Ile)-dependent editing activities. One activity is designated as 'pretransfer' editing and involves the hydrolysis of activated Val-AMP. The other activity is designated 'posttransfer' editing and involves deacylation of mischarged Val-tRNA(Ile). In Clostridium kluyveri (strain ATCC 8527 / DSM 555 / NBRC 12016 / NCIMB 10680 / K1), this protein is Isoleucine--tRNA ligase.